The following is a 3023-amino-acid chain: MDSVSGLHAALSLCASDSAKDRARAHALLPPIFANAQNLRVFQAAAATHGGAPWLALFHCLFRAVALEKRAVLRGSSNAQAAARLAHAIRIVRLVAEQAVHLIARKPLIALVAHMRHQLVLPPRIFAPALLDYSKALSTLLAYPPHVESLDRHTWLALMSMCFAAILGDDLVSDDQMDDADMLGVAAELERLDAENVPPHRPPVTLNTSSLVQIIPALLCSTVSPIVPPTMKSGDTLTAGQKVGLGIVLKIRRFFTMYPHVTIYHLHLLTALNTVLSDMELNCRDLFLLGSVKIFPHLVTLWAAPERDRDRRIPEQIAIAIHRILPHLAHSAELQGAQDVTENVERLMEMLAKESTMSRGIEPLDLGSMRLKTVAARGRHHFAACPFETRSFSAGHHFTVDHALSWTAIEIYCDACLHLYQTRAFPSTATPSRQSTPSKRRKLENPLASLVSAVGMGRPESRLIALQTLVFVIDRHWSKLAKDIQSDIRRTLVSLLTDDSETLQSWAYIALSTIILSSYTAGANENNNDENNNDGQSQDDWKQVWSFALRKCHLPGPSRSASHAAAVLLQFDKVDSPSTIRGIQTMLTTIAVQGPPTAHDSVCALYSIALEAARSDIQLYSLNLEEQVLSWLEKTFAREKFERDKMDQRLDQATPGDILRLFSAVSRIQYHVPLAEPVTKEFLPDSAVVSYALERAKTQPIRDFLLYHTCPTPPPPPPPLDDSHTTPLLAASENHSTFLGGRPRRLSELLLSILNATTAQWETKPVISSGERPRRCVDLVALGLAFQGLLQLDGYIPHAACINAAIRLLHLLKPSLTSSDLSIPSLDLVWRGLRCLADVPLAKEEEEEEEEDWPILVKPDVQSGIRQDLLPPTMYDTPPQEEEAESSDPPKRFTQYPPTFPSTLLPTPTPITPSSLSTFQSQSNSASLVHAIWRLPDVSAALQGLFSVCLQVITRSSSSTSSGQPTQLSHHEDDDGEDDDDDFAVASGETTSAPLPEKAAELRASTSLLRSAVAFRLQGVMLVSAGAGGGAQSKAYKDTQLVNSFLQADGLRAVEIGWAICEAMQKGWLRLGIDAVDLVVASLGNMLNSYGYARDERLLQLCLEFLKCSAPVWMGNDHSNDDDLKDEAMRLVCYIATKITAGSITSWRVRLAMLRFIEAFLHYDSASKLWADCMVQEEAEEEEDDVSMEDENHLFHYIAQSLSDPDMRVRARAATTAASALYRPSIHPSEHPIIYDQVSNSQAGDPTFAEHYLSYVLWKLNCCIASAKQRQTVIFDLYEAAIGGTEYSDHLQAGLNAVARRLGLPSITALYLPYAPTTTISHDTSRSSAITFVLNTTHRLFGLSNRSAFFTACLEHAGAYMLYCGKIGLFTSACDAAGVLPEDLALQLSVAAAAMAMALPLSNDKATNVSMNKCKAEALALLSSFPGISGPDAAEEFLHSYANGVAAHLWELMDLESSVDEIVAWFDKTEKESAAGIAFAQMMAHDNAKTGRVKAINPAASFQSIHNVCRFLEKNYSSISLHAFTFAAILRLTSLINNAFLVSEQRRYLRALAMLLSVHQGTLQRPLIWEAFLTETITLLLQPDICRTVLSMVMWAFDWLESLSSTPSKLVNIFCQLGEIRIELGGSGTPGSQPNQMGDALEDWIVKMSPKWFKSQISQEAFERAVALWPDSLRSRLSVHASPLSLRDLDDLSQNDAVHNAGQLCKHFLHLADADHGQDVVSVFVDSTFWSLKDKISSVWDKEGINAFQDLLYLCNGEVRAPSLNFYGQDTFSKALNATTGEHKKTEAMNALYHAMCKTMVQLLHDRRPQIRSAAYRCLQRMKPILTGKDLKELPADVSDVVPILVPIPIGSVRQSQAMKLDGVINNATWNKKAEHFATWSLELSRLLCKTASQHDKFFLSFEPLLSTPLLPLHHFLGHFVHAALVCSRSMSSERSKAISEHFETVLQNPFASIEAVRSIVNIVLQLRRYEHPFTSGMLGYNAWLSVNFVDLSKAAVKCGLYVSALLFLELANDQGESLDLAEPRVRQIMYDIYSNVEDPDGFYGIHNKDIRDSLRRRLEHEGLSWQALGWAGAVYNVDGNDSRSAIPVLHHLHDIGLSRLASVVATETRTSGSVPLDDPFFADLSWRTGDWNLPIGRESSATSSGLLYSALSAVHRSKSYESASKIVDKAVRAEMTRLGGLQKEMLTSIQSTVTNLLCLRELNRWLDPQLQQGMQEVIDKGTLRDLQDINDKFEFASAERIIATRLSVFDSVKQRESQDMIGDALTPKMELVTKAESTCHIKLSRLALKSNNLQAAINSLTALQKLQTYVGVIDEAQDVFCEVLWKQGEHTLAIQLLEDLLLREKEKKSKGQRIPALEGRLAHWASEARLKAANEIFGMFSNVTKSIKRSTADVSEHAEIFYQFACFADKQYVSQSSSADVKQLKEYSKLRASQALRLSARQSRARESDQKDSAVREAERDEEKLKKFEMQQKQYLNAALQFYAEAVSMSDNFNDCITRLVTLWLENDENEESNVTFSRAAHKVPSYKFIFLGPQLAARLHRPESPTIFNSTLNGLMFRMSQDHPYHTLYHVIPLLWEHKQPQSTNSSMLGRKSAADDIMRRLASSASNRLAVGAAKSMKRFVAIAMEWTSFFEKDKRLEYKLPSDSPLRKAPRDIPVATSTPSIDVTCQYKDIATFDHFSEWYTRAGGLSRPKVMTCFDSNGQKYTQLFKKDDGFRQDAVMEQIFVLVNDLLNRNRQTRSRKLRYRTYGVLALPEATGVIEFVVGTKPLIKYLPPAHEKYHPKDITSHDFLKAMQEVQSVKNNDEKIIQVWTKLKKRFRPVMRHLFTEKYRDPMAWFSMRLTYARSLAVTSIVGWVLEIGDRHCSNILMDECTGELVHIDFGIAFGAGRILPIPELVPFRLTDDLVDALGVTGVNGTFRQCSQLVLQTLIDSSDVILTILEVFKQDPLHTWMVDDKMKKAQDGNHKMYPERGQEKADRIMRETRENLSKELSVQYRVNQLIQEARDVNNLATIFRGWHSWL.

3 disordered regions span residues 867–919, 957–996, and 2441–2463; these read QDLL…LSTF, SSST…APLP, and ARQS…ERDE. Residues 901–919 are compositionally biased toward low complexity; that stretch reads PSTLLPTPTPITPSSLSTF. Over residues 974 to 983 the composition is skewed to acidic residues; the sequence is DDGEDDDDDF. The region spanning 1991-2579 is the FAT domain; the sequence is DLSKAAVKCG…LYHVIPLLWE (589 aa). Basic and acidic residues predominate over residues 2445–2463; sequence RARESDQKDSAVREAERDE. The PI3K/PI4K catalytic domain maps to 2681–2993; sequence FSEWYTRAGG…ETRENLSKEL (313 aa). The segment at 2687–2693 is G-loop; sequence RAGGLSR. A catalytic loop region spans residues 2860–2868; sequence EIGDRHCSN. An activation loop region spans residues 2880–2904; the sequence is HIDFGIAFGAGRILPIPELVPFRLT. One can recognise an FATC domain in the interval 2987-3023; that stretch reads ENLSKELSVQYRVNQLIQEARDVNNLATIFRGWHSWL.

It belongs to the PI3/PI4-kinase family. ATM subfamily. In terms of assembly, associates with DNA double-strand breaks.

The protein resides in the nucleus. It is found in the chromosome. Its subcellular location is the telomere. The enzyme catalyses L-seryl-[protein] + ATP = O-phospho-L-seryl-[protein] + ADP + H(+). It catalyses the reaction L-threonyl-[protein] + ATP = O-phospho-L-threonyl-[protein] + ADP + H(+). In terms of biological role, serine/threonine protein kinase which activates checkpoint signaling upon genotoxic stresses such as ionizing radiation (IR), ultraviolet light (UV), or DNA replication stalling, thereby acting as a DNA damage sensor. Recognizes the substrate consensus sequence [ST]-Q. Phosphorylates histone H2A to form H2AS128ph (gamma-H2A) at sites of DNA damage, involved in the regulation of DNA damage response mechanism. Required for the control of telomere length and genome stability. The chain is Serine/threonine-protein kinase TEL1 (TEL1) from Cryptococcus neoformans var. neoformans serotype D (strain JEC21 / ATCC MYA-565) (Filobasidiella neoformans).